A 139-amino-acid chain; its full sequence is MVGLSRLTGGGLLLVLALLPLALDGKPLEEAPTAPSRIIPFSRPVRKESQAVLDPMVHPERPAGSGDDGDLSRLEGLAKEALGDGCFGLKLDRIGTSSGLGCNPKRPDPAPTALARIIPFSRPVRKESRAALDRMQHPG.

A signal peptide spans M1 to G25. A propeptide spanning residues K26–E75 is cleaved from the precursor. The cysteines at positions 86 and 102 are disulfide-linked. Residues I117–G139 constitute a propeptide that is removed on maturation.

The protein belongs to the natriuretic peptide family. Expressed by the venom gland.

It localises to the secreted. Natriuretic peptide that dose-dependently induces the rapid relaxation of rat aortic strips phenylephrine-precontracted. Acts by stimulating cGMP production in a dose-dependent manner (by probably activating NPR1 and/or NPR2). May also show potent hypotensive effects. The chain is Natriuretic peptide Mf-NP from Micrurus fulvius (Eastern coral snake).